A 646-amino-acid polypeptide reads, in one-letter code: Heat shock 70 kDa protein (646 aa).

The segment covering 613–632 (GGAPGGMPGAAPGGFPGGAP) has biased composition (gly residues). A disordered region spans residues 613 to 646 (GGAPGGMPGAAPGGFPGGAPGSNDNEGPTVEEVD).

Belongs to the heat shock protein 70 family.

This chain is Heat shock 70 kDa protein (hsps-1), found in Neurospora crassa (strain ATCC 24698 / 74-OR23-1A / CBS 708.71 / DSM 1257 / FGSC 987).